We begin with the raw amino-acid sequence, 444 residues long: Tubulin beta chain (444 aa).

Residues glutamine 11, glutamate 69, serine 138, glycine 142, threonine 143, glycine 144, asparagine 204, and asparagine 226 each contribute to the GTP site. Glutamate 69 is a Mg(2+) binding site.

This sequence belongs to the tubulin family. In terms of assembly, dimer of alpha and beta chains. A typical microtubule is a hollow water-filled tube with an outer diameter of 25 nm and an inner diameter of 15 nM. Alpha-beta heterodimers associate head-to-tail to form protofilaments running lengthwise along the microtubule wall with the beta-tubulin subunit facing the microtubule plus end conferring a structural polarity. Microtubules usually have 13 protofilaments but different protofilament numbers can be found in some organisms and specialized cells. The cofactor is Mg(2+).

The protein localises to the cytoplasm. It is found in the cytoskeleton. Functionally, tubulin is the major constituent of microtubules, a cylinder consisting of laterally associated linear protofilaments composed of alpha- and beta-tubulin heterodimers. Microtubules grow by the addition of GTP-tubulin dimers to the microtubule end, where a stabilizing cap forms. Below the cap, tubulin dimers are in GDP-bound state, owing to GTPase activity of alpha-tubulin. The chain is Tubulin beta chain (TBB) from Onchocerca gibsoni.